The primary structure comprises 150 residues: Large ribosomal subunit protein bL9 (150 aa).

The protein belongs to the bacterial ribosomal protein bL9 family.

Its function is as follows. Binds to the 23S rRNA. This chain is Large ribosomal subunit protein bL9, found in Burkholderia cenocepacia (strain HI2424).